A 294-amino-acid chain; its full sequence is 1D-myo-inositol 2-acetamido-2-deoxy-alpha-D-glucopyranoside deacetylase (294 aa).

3 residues coordinate Zn(2+): His15, Asp18, and His150.

The protein belongs to the MshB deacetylase family. The cofactor is Zn(2+).

It catalyses the reaction 1D-myo-inositol 2-acetamido-2-deoxy-alpha-D-glucopyranoside + H2O = 1D-myo-inositol 2-amino-2-deoxy-alpha-D-glucopyranoside + acetate. Its function is as follows. Catalyzes the deacetylation of 1D-myo-inositol 2-acetamido-2-deoxy-alpha-D-glucopyranoside (GlcNAc-Ins) in the mycothiol biosynthesis pathway. The polypeptide is 1D-myo-inositol 2-acetamido-2-deoxy-alpha-D-glucopyranoside deacetylase (Streptomyces avermitilis (strain ATCC 31267 / DSM 46492 / JCM 5070 / NBRC 14893 / NCIMB 12804 / NRRL 8165 / MA-4680)).